We begin with the raw amino-acid sequence, 152 residues long: Xanthine-guanine phosphoribosyltransferase (152 aa).

Residues 37 to 38 (RG), arginine 69, and 88 to 96 (DDLVDTGGT) contribute to the 5-phospho-alpha-D-ribose 1-diphosphate site. Arginine 69 contacts GMP. Residue aspartate 89 coordinates Mg(2+). Residues aspartate 92 and isoleucine 135 each coordinate guanine. The xanthine site is built by aspartate 92 and isoleucine 135. GMP-binding positions include 92–96 (DTGGT) and 134–135 (WI).

The protein belongs to the purine/pyrimidine phosphoribosyltransferase family. XGPT subfamily. As to quaternary structure, homotetramer. It depends on Mg(2+) as a cofactor.

Its subcellular location is the cell inner membrane. It catalyses the reaction GMP + diphosphate = guanine + 5-phospho-alpha-D-ribose 1-diphosphate. It carries out the reaction XMP + diphosphate = xanthine + 5-phospho-alpha-D-ribose 1-diphosphate. The enzyme catalyses IMP + diphosphate = hypoxanthine + 5-phospho-alpha-D-ribose 1-diphosphate. Its pathway is purine metabolism; GMP biosynthesis via salvage pathway; GMP from guanine: step 1/1. It functions in the pathway purine metabolism; XMP biosynthesis via salvage pathway; XMP from xanthine: step 1/1. Purine salvage pathway enzyme that catalyzes the transfer of the ribosyl-5-phosphate group from 5-phospho-alpha-D-ribose 1-diphosphate (PRPP) to the N9 position of the 6-oxopurines guanine and xanthine to form the corresponding ribonucleotides GMP (guanosine 5'-monophosphate) and XMP (xanthosine 5'-monophosphate), with the release of PPi. To a lesser extent, also acts on hypoxanthine. This is Xanthine-guanine phosphoribosyltransferase from Serratia proteamaculans (strain 568).